The primary structure comprises 199 residues: Protein GrpE (199 aa).

A disordered region spans residues 1–40 (MEKKKHGTNSISEALKVKAAVEQETATPEPTPQSETESAD). The span at 24 to 36 (ETATPEPTPQSET) shows a compositional bias: polar residues.

It belongs to the GrpE family. As to quaternary structure, homodimer.

It is found in the cytoplasm. Participates actively in the response to hyperosmotic and heat shock by preventing the aggregation of stress-denatured proteins, in association with DnaK and GrpE. It is the nucleotide exchange factor for DnaK and may function as a thermosensor. Unfolded proteins bind initially to DnaJ; upon interaction with the DnaJ-bound protein, DnaK hydrolyzes its bound ATP, resulting in the formation of a stable complex. GrpE releases ADP from DnaK; ATP binding to DnaK triggers the release of the substrate protein, thus completing the reaction cycle. Several rounds of ATP-dependent interactions between DnaJ, DnaK and GrpE are required for fully efficient folding. The protein is Protein GrpE of Geotalea uraniireducens (strain Rf4) (Geobacter uraniireducens).